Reading from the N-terminus, the 876-residue chain is Bifunctional uridylyltransferase/uridylyl-removing enzyme (876 aa).

The segment at 1–332 is uridylyltransferase; sequence MPYQSPITFQ…NNGEEAEAVI (332 aa). The segment at 333 to 692 is uridylyl-removing; that stretch reads IDDDFQRRGN…LSKKATRGGT (360 aa). Residues 451-573 form the HD domain; it reads VDEHSIRLLK…VRDEERLEYL (123 aa). 2 ACT domains span residues 693–777 and 800–876; these read EVFI…RIPR and LMEF…PSAQ.

It belongs to the GlnD family. Mg(2+) serves as cofactor.

It carries out the reaction [protein-PII]-L-tyrosine + UTP = [protein-PII]-uridylyl-L-tyrosine + diphosphate. The enzyme catalyses [protein-PII]-uridylyl-L-tyrosine + H2O = [protein-PII]-L-tyrosine + UMP + H(+). Its activity is regulated as follows. Uridylyltransferase (UTase) activity is inhibited by glutamine, while glutamine activates uridylyl-removing (UR) activity. In terms of biological role, modifies, by uridylylation and deuridylylation, the PII regulatory proteins (GlnB and homologs), in response to the nitrogen status of the cell that GlnD senses through the glutamine level. Under low glutamine levels, catalyzes the conversion of the PII proteins and UTP to PII-UMP and PPi, while under higher glutamine levels, GlnD hydrolyzes PII-UMP to PII and UMP (deuridylylation). Thus, controls uridylylation state and activity of the PII proteins, and plays an important role in the regulation of nitrogen assimilation and metabolism. The chain is Bifunctional uridylyltransferase/uridylyl-removing enzyme from Vibrio cholerae serotype O1 (strain ATCC 39315 / El Tor Inaba N16961).